We begin with the raw amino-acid sequence, 447 residues long: Phospholipase A(1) DAD1, chloroplastic (447 aa).

Residues 1-46 constitute a chloroplast transit peptide; that stretch reads MRFSLSPVRPHSVVVPSLPKQDVVSYISGTTSNRQCRCVLTLPSPS. Positions 293 to 297 match the GXSXG motif; sequence GHSLG. The Acyl-ester intermediate role is filled by serine 295. Residues aspartate 352 and histidine 418 each act as charge relay system in the active site.

Belongs to the AB hydrolase superfamily. Lipase family. Expressed in flower buds, but not in leaves or roots. Restricted to the stamen filaments immediately before flower opening.

The protein resides in the plastid. Its subcellular location is the chloroplast. It catalyses the reaction a 1,2-diacyl-sn-glycero-3-phosphocholine + H2O = a 2-acyl-sn-glycero-3-phosphocholine + a fatty acid + H(+). It carries out the reaction 1-hexadecanoyl-2-(9Z,12Z-octadecadienoyl)-sn-glycero-3-phosphocholine + H2O = 2-(9Z,12Z-octadecadienoyl)-sn-glycero-3-phosphocholine + hexadecanoate + H(+). Functionally, sn-1-specific phospholipase that releases free fatty acids from phospholipids. Low activity on galactolipids and triacylglycerols. Catalyzes the initial step of jasmonic acid biosynthesis. Not essential for jasmonate biosynthesis after wounding or upon pathogen infection. The sequence is that of Phospholipase A(1) DAD1, chloroplastic from Arabidopsis thaliana (Mouse-ear cress).